The following is a 167-amino-acid chain: Xanthine-guanine phosphoribosyltransferase (167 aa).

Residues 47–48, Gln-79, and 102–110 each bind 5-phospho-alpha-D-ribose 1-diphosphate; these read RG and DDLVDSGKT. A GMP-binding site is contributed by Gln-79. Mg(2+) is bound at residue Asp-103. Asp-106 and Ile-149 together coordinate guanine. Xanthine is bound by residues Asp-106 and Ile-149. Residues 106 to 110 and 148 to 149 each bind GMP; these read DSGKT and WI.

This sequence belongs to the purine/pyrimidine phosphoribosyltransferase family. XGPT subfamily. As to quaternary structure, homotetramer. It depends on Mg(2+) as a cofactor.

Its subcellular location is the cell inner membrane. It catalyses the reaction GMP + diphosphate = guanine + 5-phospho-alpha-D-ribose 1-diphosphate. It carries out the reaction XMP + diphosphate = xanthine + 5-phospho-alpha-D-ribose 1-diphosphate. The enzyme catalyses IMP + diphosphate = hypoxanthine + 5-phospho-alpha-D-ribose 1-diphosphate. Its pathway is purine metabolism; GMP biosynthesis via salvage pathway; GMP from guanine: step 1/1. It functions in the pathway purine metabolism; XMP biosynthesis via salvage pathway; XMP from xanthine: step 1/1. Purine salvage pathway enzyme that catalyzes the transfer of the ribosyl-5-phosphate group from 5-phospho-alpha-D-ribose 1-diphosphate (PRPP) to the N9 position of the 6-oxopurines guanine and xanthine to form the corresponding ribonucleotides GMP (guanosine 5'-monophosphate) and XMP (xanthosine 5'-monophosphate), with the release of PPi. To a lesser extent, also acts on hypoxanthine. The chain is Xanthine-guanine phosphoribosyltransferase from Cereibacter sphaeroides (strain ATCC 17025 / ATH 2.4.3) (Rhodobacter sphaeroides).